A 391-amino-acid polypeptide reads, in one-letter code: Elongation factor Tu 1 (391 aa).

The region spanning 10-201 is the tr-type G domain; the sequence is KLHVNIGTIG…EVDRYIPTPE (192 aa). The segment at 19–26 is G1; the sequence is GHVDHGKT. 19-26 contacts GTP; sequence GHVDHGKT. Thr-26 serves as a coordination point for Mg(2+). Residues 55–59 form a G2 region; the sequence is GITIS. The tract at residues 76-79 is G3; it reads DCPG. Residues 76-80 and 131-134 contribute to the GTP site; these read DCPGH and NKVD. The segment at 131–134 is G4; the sequence is NKVD. The segment at 169 to 171 is G5; the sequence is SAL.

The protein belongs to the TRAFAC class translation factor GTPase superfamily. Classic translation factor GTPase family. EF-Tu/EF-1A subfamily. Monomer.

The protein localises to the cytoplasm. It catalyses the reaction GTP + H2O = GDP + phosphate + H(+). In terms of biological role, GTP hydrolase that promotes the GTP-dependent binding of aminoacyl-tRNA to the A-site of ribosomes during protein biosynthesis. The protein is Elongation factor Tu 1 of Bartonella bacilliformis (strain ATCC 35685 / KC583 / Herrer 020/F12,63).